A 232-amino-acid chain; its full sequence is 7-cyano-7-deazaguanine synthase (232 aa).

7–17 (CSGGLDSVSLA) provides a ligand contact to ATP. Residues Cys185, Cys193, Cys196, and Cys199 each coordinate Zn(2+).

Belongs to the QueC family. Requires Zn(2+) as cofactor.

The catalysed reaction is 7-carboxy-7-deazaguanine + NH4(+) + ATP = 7-cyano-7-deazaguanine + ADP + phosphate + H2O + H(+). It functions in the pathway purine metabolism; 7-cyano-7-deazaguanine biosynthesis. Functionally, catalyzes the ATP-dependent conversion of 7-carboxy-7-deazaguanine (CDG) to 7-cyano-7-deazaguanine (preQ(0)). The chain is 7-cyano-7-deazaguanine synthase from Brucella abortus (strain S19).